We begin with the raw amino-acid sequence, 606 residues long: Electron transfer flavoprotein-ubiquinone oxidoreductase, mitochondrial (606 aa).

59 to 73 (VVIVGAGPSGLSTAI) provides a ligand contact to FAD. A helical membrane pass occupies residues 448–468 (PSLHWGTIPGLIYGALEMYIF). Positions 551, 575, 578, and 581 each coordinate [4Fe-4S] cluster.

This sequence belongs to the ETF-QO/FixC family. In terms of assembly, monomer. [4Fe-4S] cluster is required as a cofactor. It depends on FAD as a cofactor.

The protein resides in the mitochondrion inner membrane. The catalysed reaction is a ubiquinone + reduced [electron-transfer flavoprotein] = a ubiquinol + oxidized [electron-transfer flavoprotein] + H(+). Functionally, accepts electrons from ETF and reduces ubiquinone. This Dictyostelium discoideum (Social amoeba) protein is Electron transfer flavoprotein-ubiquinone oxidoreductase, mitochondrial (etfdh).